Consider the following 625-residue polypeptide: Beta-galactosidase large subunit (625 aa).

Residue glutamate 465 is the Proton donor of the active site. Glutamate 533 (nucleophile) is an active-site residue.

Belongs to the glycosyl hydrolase 2 family. In terms of assembly, heterodimer of a large (LacL) and a small subunit (LacM).

It catalyses the reaction Hydrolysis of terminal non-reducing beta-D-galactose residues in beta-D-galactosides.. In terms of biological role, component of a beta-galactosidase. This Latilactobacillus sakei (Lactobacillus sakei) protein is Beta-galactosidase large subunit.